Here is a 710-residue protein sequence, read N- to C-terminus: Solute carrier organic anion transporter family member 3A1 (710 aa).

Met-1 is subject to N-acetylmethionine. Residues 1 to 15 (MQGKKPGGSSGGGRS) are compositionally biased toward gly residues. The segment at 1–25 (MQGKKPGGSSGGGRSGELQGDEAQR) is disordered. The Cytoplasmic portion of the chain corresponds to 1-40 (MQGKKPGGSSGGGRSGELQGDEAQRNKKKKKKVSCFSNIK). Residues 41–60 (IFLVSECALMLAQGTVGAYL) form a helical membrane-spanning segment. The Extracellular portion of the chain corresponds to 61 to 79 (VSVLTTLERRFNLQSADVG). A helical membrane pass occupies residues 80–100 (VIASSFEIGNLALILFVSYFG). The Cytoplasmic portion of the chain corresponds to 101 to 106 (ARGHRP). The helical transmembrane segment at 107–131 (RLIGCGGIVMALGALLSALPEFLTH) threads the bilayer. Topologically, residues 132 to 174 (QYKYEAGEIRWGAEGRDVCATNGSSSDEGPDPDLICRNRTATN) are extracellular. Asn-153 and Asn-169 each carry an N-linked (GlcNAc...) asparagine glycan. A helical membrane pass occupies residues 175–203 (MMYLLLIGAQVLLGIGATPVQPLGVSYID). Over 204–222 (DHVRRKDSSLYIGILFTML) the chain is Cytoplasmic. The helical transmembrane segment at 223-243 (VFGPACGFILGSFCTKIYVDA) threads the bilayer. The Extracellular segment spans residues 244–261 (VFIDTSNLDITPDDPRWI). The helical transmembrane segment at 262-286 (GAWWGGFLLCGALLFFSSLLMFGFP) threads the bilayer. The Cytoplasmic segment spans residues 287-344 (QSLPPHSEPGMESEQAMLPEREYERPKPSNGVLRHPLEPDSSASCFQQLRVIPKVTKH). Residues 345–366 (LLSNPVFTCIVLAACMEIAVVA) traverse the membrane as a helical segment. Residues 367–386 (GFAAFLGKYLEQQFNLTTSS) are Extracellular-facing. N-linked (GlcNAc...) asparagine glycosylation is present at Asn-381. The helical transmembrane segment at 387-410 (ANQLLGMTAIPCACLGIFLGGLLV) threads the bilayer. At 411 to 414 (KKLS) the chain is on the cytoplasmic side. A helical transmembrane segment spans residues 415–438 (LSALGAIRMAMLVNLVSTACYVSF). Residues 439 to 539 (LFLGCDTVPV…PGCQEAFLTF (101 aa)) are Extracellular-facing. Residue Asn-457 is glycosylated (N-linked (GlcNAc...) asparagine). Residues 465–513 (LDPYSPCNNNCECQTDSFTPVCGADGITYLSACFAGCNSTNLTGCACLT) form the Kazal-like domain. Disulfide bonds link Cys-471-Cys-501, Cys-477-Cys-497, and Cys-486-Cys-511. 3 N-linked (GlcNAc...) asparagine glycosylation sites follow: Asn-502, Asn-505, and Asn-519. A helical membrane pass occupies residues 540 to 562 (LCVMCVCSLIGAMAQTPSVIILI). Over 563–571 (RTVSPELKS) the chain is Cytoplasmic. A helical transmembrane segment spans residues 572-597 (YALGVLFLLLRLLGFIPPPLIFGAGI). Over 598–630 (DSTCLFWSTFCGEQGACVLYDNVVYRYLYVSIA) the chain is Extracellular. The chain crosses the membrane as a helical span at residues 631-648 (IALKSFAFILYTTTWQCL). Residues 649-705 (RKNYKRYIKNHEGGLSTSEFLASTLTLDNLGRDPVPAHQTHRTKFIYNLEDHEWCEN) are Cytoplasmic-facing.

This sequence belongs to the organo anion transporter (TC 2.A.60) family. As to expression, expressed in many brain regions, including frontal cortex, brain stem and cerebellum. Associated with neuronal bodies in a punctated matter. Detected at the arcuate nucleus and the choroid plexus (at protein level). Little expression, if any, in oligodendrocytes. In the cardiovascular system, detected in cardiac muscle cells and endothelial cells of aorta, coronary artery and left ventricular endocardium (at protein level). In the respiratory system, detected in alveolar epithelial cells and in mucosal epithelium of the trachea (at protein level). In the reproductive system, detected in spermatozoa, oocytes, smooth muscle cells of the ovary, epithelium of the glandula uterine, smooth muscle cells of the myometrium and epithelium of the endometrium (at protein level). In the kidney, detected in afferent and efferent arterioles, and the epithelium of distal tubules and collecting tubules (at protein level).

The protein resides in the basolateral cell membrane. The protein localises to the apical cell membrane. It is found in the basal cell membrane. It carries out the reaction L-thyroxine(out) = L-thyroxine(in). The enzyme catalyses prostaglandin E1(out) = prostaglandin E1(in). It catalyses the reaction prostaglandin E2(out) = prostaglandin E2(in). The catalysed reaction is prostaglandin F2alpha(out) = prostaglandin F2alpha(in). It carries out the reaction (5Z,8Z,11Z,14Z)-eicosatetraenoate(out) = (5Z,8Z,11Z,14Z)-eicosatetraenoate(in). The enzyme catalyses taurocholate(out) = taurocholate(in). It catalyses the reaction glycocholate(out) = glycocholate(in). The catalysed reaction is estrone 3-sulfate(out) = estrone 3-sulfate(in). It carries out the reaction argipressin(out) = argipressin(in). In terms of biological role, putative organic anion antiporter with apparent broad substrate specificity. Recognizes various substrates including thyroid hormone L-thyroxine, prostanoids such as prostaglandin E1 and E2, bile acids such as taurocholate, glycolate and glycochenodeoxycholate and peptide hormones such as L-arginine vasopressin, likely operating in a tissue-specific manner. The transport mechanism, its electrogenicity and potential tissue-specific counterions remain to be elucidated. The sequence is that of Solute carrier organic anion transporter family member 3A1 (Slco3a1) from Rattus norvegicus (Rat).